The following is a 344-amino-acid chain: Galactinol synthase 1 (344 aa).

Lysine 111 is a catalytic residue. Residues aspartate 127, aspartate 129, and histidine 265 each contribute to the Mn(2+) site.

It belongs to the glycosyltransferase 8 family. Galactosyltransferase subfamily. The cofactor is a divalent metal cation. In terms of tissue distribution, accumulates in mature seeds. Expressed in seedlings (axes and cotyledons), meristems, vascular tissues and emerging lateral roots. Present in abscission zones.

It is found in the cytoplasm. It carries out the reaction myo-inositol + UDP-alpha-D-galactose = alpha-D-galactosyl-(1-&gt;3)-1D-myo-inositol + UDP + H(+). Its function is as follows. Galactinol synthase involved in the biosynthesis of raffinose family oligosaccharides (RFOs) that function as osmoprotectants. Promotes plant stress tolerance such as heat, chilling, salinity and methylviologen (MV), a superoxide radical generating drug, by mediating raffinose accumulation, an osmoprotective substance. The chain is Galactinol synthase 1 (GOLS1) from Arabidopsis thaliana (Mouse-ear cress).